The chain runs to 205 residues: Mediator of RNA polymerase II transcription subunit 29 (205 aa).

Residues 1–27 (MNPNMNMMQMSGPPMMQVSPMMQSSPQ) are compositionally biased toward low complexity. The tract at residues 1 to 65 (MNPNMNMMQM…QQQQQQAEKL (65 aa)) is disordered. The segment covering 28–38 (PMMPTGPPGPV) has biased composition (pro residues). Positions 39–61 (PMQQQHQQQQQQQQQQQQQQQQQ) are enriched in low complexity.

It belongs to the Mediator complex subunit 29 family. Component of the Mediator complex.

It is found in the nucleus. In terms of biological role, component of the Mediator complex, a coactivator involved in the regulated transcription of nearly all RNA polymerase II-dependent genes. Mediator functions as a bridge to convey information from gene-specific regulatory proteins to the basal RNA polymerase II transcription machinery. Mediator is recruited to promoters by direct interactions with regulatory proteins and serves as a scaffold for the assembly of a functional preinitiation complex with RNA polymerase II and the general transcription factors. The sequence is that of Mediator of RNA polymerase II transcription subunit 29 (ix) from Drosophila virilis (Fruit fly).